The sequence spans 328 residues: Cytochrome c biogenesis protein CcsA (328 aa).

8 helical membrane passes run 13-33 (ISFSVVSIVLTIYFLTLLVNL), 46-66 (GIIITFFGITGLLFTRWIYSG), 73-93 (LYESLIFLSWAFSIIHMVSYF), 101-121 (LNAITAPSAIFIQGFATSGLL), 146-166 (MILGYGALLCGSLLSIALLVI), 234-254 (IISLGFIFLTVGILSGAVWAN), 263-283 (WDPKETWAFITWTIFAIYLHI), and 295-315 (AIVASIGFLLIWICYFGVILL).

It belongs to the CcmF/CycK/Ccl1/NrfE/CcsA family. May interact with Ccs1.

The protein localises to the plastid. It is found in the chloroplast thylakoid membrane. Functionally, required during biogenesis of c-type cytochromes (cytochrome c6 and cytochrome f) at the step of heme attachment. The sequence is that of Cytochrome c biogenesis protein CcsA from Crucihimalaya wallichii (Rock-cress).